The following is a 346-amino-acid chain: Methylthioribose-1-phosphate isomerase (346 aa).

Residues 48–50, arginine 88, and glutamine 192 each bind substrate; that span reads RGA. Aspartate 233 acts as the Proton donor in catalysis. Residue 243-244 participates in substrate binding; the sequence is NK.

The protein belongs to the eIF-2B alpha/beta/delta subunits family. MtnA subfamily.

The enzyme catalyses 5-(methylsulfanyl)-alpha-D-ribose 1-phosphate = 5-(methylsulfanyl)-D-ribulose 1-phosphate. It functions in the pathway amino-acid biosynthesis; L-methionine biosynthesis via salvage pathway; L-methionine from S-methyl-5-thio-alpha-D-ribose 1-phosphate: step 1/6. Functionally, catalyzes the interconversion of methylthioribose-1-phosphate (MTR-1-P) into methylthioribulose-1-phosphate (MTRu-1-P). This is Methylthioribose-1-phosphate isomerase from Alcanivorax borkumensis (strain ATCC 700651 / DSM 11573 / NCIMB 13689 / SK2).